Here is a 404-residue protein sequence, read N- to C-terminus: Serine/threonine transporter SstT (404 aa).

9 consecutive transmembrane segments (helical) span residues 17–37 (IGIGVVIGLLLGILLPDVTAI), 44–64 (FVGALKAIAPLLVFALVVQAI), 75–95 (MTLIIVLYLLGTFLAALVAVI), 138–158 (ALATANYIGVLAWALIFGLAL), 179–199 (IVVWIINVAPIGIMGLVFSTV), 212–232 (LLILVLVGTMLFVALVVNPLL), 287–307 (IPLGAMINMGGAAITINVLTL), 319–339 (FLTALLLSVVAAISACGASGV), and 354–374 (FGISSDLAMQVVGVGFIVGVI).

This sequence belongs to the dicarboxylate/amino acid:cation symporter (DAACS) (TC 2.A.23) family.

It is found in the cell membrane. The catalysed reaction is L-serine(in) + Na(+)(in) = L-serine(out) + Na(+)(out). The enzyme catalyses L-threonine(in) + Na(+)(in) = L-threonine(out) + Na(+)(out). Functionally, involved in the import of serine and threonine into the cell, with the concomitant import of sodium (symport system). This chain is Serine/threonine transporter SstT, found in Streptococcus equi subsp. zooepidemicus (strain H70).